The following is a 476-amino-acid chain: mRNA cap guanine-N(7) methyltransferase (476 aa).

Residues M1–S14 show a composition bias toward basic and acidic residues. Residues M1–S146 are disordered. Over residues A20 to C50 the composition is skewed to polar residues. Residues S24, S28, and S29 each carry the phosphoserine modification. Composition is skewed to basic and acidic residues over residues D54–K68 and L84–S118. Position 118 is a phosphoserine (S118). The Nuclear localization signal signature appears at K126–K128. The span at I129–H145 shows a compositional bias: basic and acidic residues. Residues S167–Q475 form the mRNA cap 0 methyltransferase domain. N176 to N177 contributes to the mRNA binding site. The S-adenosyl-L-methionine site is built by K180, G205, D227, D261, Q284, and Y289.

Belongs to the class I-like SAM-binding methyltransferase superfamily. mRNA cap 0 methyltransferase family. As to quaternary structure, interacts with importin alpha, leading to stimulate both RNA-binding and methyltransferase activity. Interaction with importin alpha and beta is required for its nuclear localization, importin beta dissociating in response to RanGTP, allowing RNMT-importin alpha to bind RNA substrates. Interacts with elongating form of polymerase II and RNGTT. Interacts with RAMAC, this interaction significantly enhances RNA-binding and cap methyltransferase activity. In terms of tissue distribution, widely expressed.

The protein localises to the nucleus. It catalyses the reaction a 5'-end (5'-triphosphoguanosine)-ribonucleoside in mRNA + S-adenosyl-L-methionine = a 5'-end (N(7)-methyl 5'-triphosphoguanosine)-ribonucleoside in mRNA + S-adenosyl-L-homocysteine. Its activity is regulated as follows. Methyltransferase activity is activated by RAMAC. In terms of biological role, catalytic subunit of the mRNA-capping methyltransferase RNMT:RAMAC complex that methylates the N7 position of the added guanosine to the 5'-cap structure of mRNAs. Binds RNA containing 5'-terminal GpppC. The chain is mRNA cap guanine-N(7) methyltransferase (RNMT) from Homo sapiens (Human).